The chain runs to 193 residues: Zinc finger protein AZF3 (193 aa).

C2H2-type zinc fingers lie at residues 75–97 and 118–140; these read YKCGVCYKTFSSYQALGGHKASH and HVCSVCGKSFATGQALGGHKRCH.

As to expression, expressed in roots.

The protein resides in the nucleus. In terms of biological role, transcriptional repressor probably involved in abiotic stress responses. Binds DNA in a sequence-specific manner and can repress the transactivation activity of other transcription factors. The protein is Zinc finger protein AZF3 (AZF3) of Arabidopsis thaliana (Mouse-ear cress).